We begin with the raw amino-acid sequence, 159 residues long: Transcriptional repressor NrdR (159 aa).

A zinc finger spans residues 3–34 (CPFCRHDDTQVVDSRVSEDGAAIRRRRRCSAC). The ATP-cone domain occupies 49 to 139 (PFVVKKDGSR…VYRRFEDVSE (91 aa)).

The protein belongs to the NrdR family. It depends on Zn(2+) as a cofactor.

Negatively regulates transcription of bacterial ribonucleotide reductase nrd genes and operons by binding to NrdR-boxes. The protein is Transcriptional repressor NrdR of Burkholderia cenocepacia (strain ATCC BAA-245 / DSM 16553 / LMG 16656 / NCTC 13227 / J2315 / CF5610) (Burkholderia cepacia (strain J2315)).